The sequence spans 321 residues: uncharacterized protein (321 aa).

Residues 1 to 18 (MKKMKKLLLLLSASFAFS) form the signal peptide.

This is an uncharacterized protein from Aquifex aeolicus (strain VF5).